Reading from the N-terminus, the 254-residue chain is Small ribosomal subunit protein uS2 (254 aa).

It belongs to the universal ribosomal protein uS2 family.

This Oceanobacillus iheyensis (strain DSM 14371 / CIP 107618 / JCM 11309 / KCTC 3954 / HTE831) protein is Small ribosomal subunit protein uS2.